Here is a 21-residue protein sequence, read N- to C-terminus: Hemocyanin subunit 4 (21 aa).

The protein belongs to the tyrosinase family. Hemocyanin subfamily. Hemolymph.

It is found in the secreted. Its subcellular location is the extracellular space. Its function is as follows. Hemocyanins are copper-containing oxygen carriers occurring freely dissolved in the hemolymph of many mollusks and arthropods. The protein is Hemocyanin subunit 4 of Maja squinado (Mediterranean spider crab).